The chain runs to 383 residues: Chaperone protein DnaJ (383 aa).

One can recognise a J domain in the interval 5–70 (DYYKTLGVTQ…KKRTAYDQYG (66 aa)). A CR-type zinc finger spans residues 137–215 (GTIKEIKIPT…CHGNGRIEIS (79 aa)). Zn(2+) contacts are provided by Cys150, Cys153, Cys167, Cys170, Cys189, Cys192, Cys203, and Cys206. CXXCXGXG motif repeat units lie at residues 150–157 (CPTCYGYG), 167–174 (CPTCRGNG), 189–196 (CPQCHGEG), and 203–210 (CRRCHGNG).

Belongs to the DnaJ family. As to quaternary structure, homodimer. Requires Zn(2+) as cofactor.

Its subcellular location is the cytoplasm. Its function is as follows. Participates actively in the response to hyperosmotic and heat shock by preventing the aggregation of stress-denatured proteins and by disaggregating proteins, also in an autonomous, DnaK-independent fashion. Unfolded proteins bind initially to DnaJ; upon interaction with the DnaJ-bound protein, DnaK hydrolyzes its bound ATP, resulting in the formation of a stable complex. GrpE releases ADP from DnaK; ATP binding to DnaK triggers the release of the substrate protein, thus completing the reaction cycle. Several rounds of ATP-dependent interactions between DnaJ, DnaK and GrpE are required for fully efficient folding. Also involved, together with DnaK and GrpE, in the DNA replication of plasmids through activation of initiation proteins. This is Chaperone protein DnaJ from Buchnera aphidicola subsp. Baizongia pistaciae (strain Bp).